Consider the following 143-residue polypeptide: Cytochrome c-type biogenesis protein CcmE (143 aa).

Topologically, residues Met-1–Lys-8 are cytoplasmic. Residues Leu-9–Ala-29 form a helical; Signal-anchor for type II membrane protein membrane-spanning segment. Residues Leu-30–Gln-143 are Periplasmic-facing. Heme contacts are provided by His-124 and Tyr-128.

It belongs to the CcmE/CycJ family.

The protein localises to the cell inner membrane. In terms of biological role, heme chaperone required for the biogenesis of c-type cytochromes. Transiently binds heme delivered by CcmC and transfers the heme to apo-cytochromes in a process facilitated by CcmF and CcmH. This is Cytochrome c-type biogenesis protein CcmE from Legionella pneumophila (strain Lens).